A 416-amino-acid polypeptide reads, in one-letter code: Glutamyl-tRNA reductase (416 aa).

Substrate contacts are provided by residues 49–52 (TCNR), Ser105, 110–112 (EPQ), and Gln116. The Nucleophile role is filled by Cys50. 185–190 (GAGEMI) is a binding site for NADP(+).

This sequence belongs to the glutamyl-tRNA reductase family. In terms of assembly, homodimer.

It catalyses the reaction (S)-4-amino-5-oxopentanoate + tRNA(Glu) + NADP(+) = L-glutamyl-tRNA(Glu) + NADPH + H(+). It functions in the pathway porphyrin-containing compound metabolism; protoporphyrin-IX biosynthesis; 5-aminolevulinate from L-glutamyl-tRNA(Glu): step 1/2. In terms of biological role, catalyzes the NADPH-dependent reduction of glutamyl-tRNA(Glu) to glutamate 1-semialdehyde (GSA). This is Glutamyl-tRNA reductase from Nitrosomonas europaea (strain ATCC 19718 / CIP 103999 / KCTC 2705 / NBRC 14298).